The following is a 409-amino-acid chain: Autophagy-related protein 37 (409 aa).

Residues 1 to 313 (MSESIDRVFV…LKLIKTVIKH (313 aa)) are Cytoplasmic-facing. Positions 5–103 (IDRVFVKAIG…LIDTMKQFAS (99 aa)) constitute an ACB domain. The helical transmembrane segment at 314-334 (VAIDAVIIAVLVAVIKRSIII) threads the bilayer. At 335 to 409 (PNLISNEISL…VSRIRLIKRN (75 aa)) the chain is on the peroxisomal side.

It belongs to the ATG37 family. As to quaternary structure, interacts with ATG30 and PEX3. In terms of processing, phosphorylated.

It localises to the peroxisome membrane. Acyl-CoA binding protein which acts as the peroxisome receptor for pexophagy. Required for both micropexophagy and macropexophagy, but not for the cytoplasm to vacuole transport (Cvt) or autophagy pathways. Required for functional micropexophagic apparatus (MIPA) and relocation of ATG11 to the peroxisome-sequestering arms of the vacuole. Binds palmitoyl-CoA but not oleyl-CoA. The protein is Autophagy-related protein 37 of Komagataella phaffii (strain GS115 / ATCC 20864) (Yeast).